The chain runs to 427 residues: Glutamate-1-semialdehyde 2,1-aminomutase (427 aa).

K265 bears the N6-(pyridoxal phosphate)lysine mark.

It belongs to the class-III pyridoxal-phosphate-dependent aminotransferase family. HemL subfamily. In terms of assembly, homodimer. It depends on pyridoxal 5'-phosphate as a cofactor.

The protein resides in the cytoplasm. The catalysed reaction is (S)-4-amino-5-oxopentanoate = 5-aminolevulinate. It participates in porphyrin-containing compound metabolism; protoporphyrin-IX biosynthesis; 5-aminolevulinate from L-glutamyl-tRNA(Glu): step 2/2. The polypeptide is Glutamate-1-semialdehyde 2,1-aminomutase (Bordetella petrii (strain ATCC BAA-461 / DSM 12804 / CCUG 43448)).